Consider the following 65-residue polypeptide: 7 kDa A-type inclusion protein (65 aa).

A compositionally biased stretch (polar residues) spans 1–20 (MSNQNIPQLSEYQTSVSQVA). The tract at residues 1–31 (MSNQNIPQLSEYQTSVSQVAVTPPPKPETPQ) is disordered.

The chain is 7 kDa A-type inclusion protein from Vaccinia virus (strain Copenhagen) (VACV).